Reading from the N-terminus, the 438-residue chain is Thymidine phosphorylase (438 aa).

This sequence belongs to the thymidine/pyrimidine-nucleoside phosphorylase family. In terms of assembly, homodimer.

It catalyses the reaction thymidine + phosphate = 2-deoxy-alpha-D-ribose 1-phosphate + thymine. It functions in the pathway pyrimidine metabolism; dTMP biosynthesis via salvage pathway; dTMP from thymine: step 1/2. Its function is as follows. The enzymes which catalyze the reversible phosphorolysis of pyrimidine nucleosides are involved in the degradation of these compounds and in their utilization as carbon and energy sources, or in the rescue of pyrimidine bases for nucleotide synthesis. The polypeptide is Thymidine phosphorylase (Colwellia psychrerythraea (strain 34H / ATCC BAA-681) (Vibrio psychroerythus)).